We begin with the raw amino-acid sequence, 648 residues long: MEVKGKKQFTGKSTKTAQEKNRFHKNSDSGSSKTFPTRKVAKEGGPKVTSRNFEKSITKLGKKGVKQFKNKQQGDKSPKNKFQPANKFNKKRKFQPDGRSDESAAKKPKWDDFKKKKKELKQSRQLSDKTNYDIVVRAKQMWEILRRKDCDKEKRVKLMSDLQKLIQGKIKTIAFAHDSTRVIQCYIQYGNEEQRKQAFEELRDDLVELSKAKYSRNIVKKFLMYGSKPQIAEIIRSFKGHVRKMLRHAEASAIVEYAYNDKAILEQRNMLTEELYGNTFQLYKSADHRTLDKVLEVQPEKLELIMDEMKQILTPMAQKEAVIKHSLVHKVFLDFFTYAPPKLRSEMIEAIREAVVYLAHTHDGARVAMHCLWHGTPKDRKVIVKTMKTYVEKVANGQYSHLVLLAAFDCIDDTKLVKQIIISEIISSLPSIVNDKYGRKVLLYLLSPRDPAHTVREIIEVLQKGDGNAHSKKDTEVRRRELLESISPALLSYLQEHAQEVVLDKSACVLVSDILGSATGDVQPTMNAIASLAATGLHPGGKDGELHIAEHPAGHLVLKWLIEQDKKMKENGREGCFAKTLVEHVGMKNLKSWASVNRGAIILSSLLQSCDLEVANKVKAALKSLIPTLEKTKSTSKGIEILLEKLST.

Residues 1–124 (MEVKGKKQFT…KKKKELKQSR (124 aa)) are disordered. A compositionally biased stretch (basic and acidic residues) spans 17–27 (AQEKNRFHKNS). Lys33 carries the N6-acetyllysine modification. The span at 60 to 69 (LGKKGVKQFK) shows a compositional bias: basic residues. Positions 94–124 (FQPDGRSDESAAKKPKWDDFKKKKKELKQSR) are enriched in basic and acidic residues. The Nuclear localization signal motif lies at 106–118 (KKPKWDDFKKKKK). A PUM-HD domain is found at 143–510 (EILRRKDCDK…VVLDKSACVL (368 aa)). Pumilio repeat units lie at residues 177-212 (HDSTRVIQCYIQYGNEEQRKQAFEELRDDLVELSKA), 213-248 (KYSRNIVKKFLMYGSKPQIAEIIRSFKGHVRKMLRH), 249-277 (AEASAIVEYAYNDKAILEQRNMLTEELYG), 289-325 (RTLDKVLEVQPEKLELIMDEMKQILTPMAQKEAVIKH), 326-361 (SLVHKVFLDFFTYAPPKLRSEMIEAIREAVVYLAHT), 362-397 (HDGARVAMHCLWHGTPKDRKVIVKTMKTYVEKVANG), 398-435 (QYSHLVLLAAFDCIDDTKLVKQIIISEIISSLPSIVND), 436-504 (KYGR…VVLD), 505-551 (KSAC…IAEH), 552-596 (PAGH…WASV), and 597-636 (NRGAIILSSLLQSCDLEVANKVKAALKSLIPTLEKTKSTS). The tract at residues 289–297 (RTLDKVLEV) is HA-8.

In terms of assembly, interacts with PARP1 (via catalytic domain). Widely expressed.

The protein localises to the nucleus. It is found in the nucleolus. Its subcellular location is the nucleoplasm. The protein resides in the chromosome. Functionally, inhibits the poly(ADP-ribosyl)ation activity of PARP1 and the degradation of PARP1 by CASP3 following genotoxic stress. Binds to double-stranded RNA or DNA without sequence specificity. Involved in development of the eye and of primordial germ cells. This chain is Pumilio homolog 3, found in Homo sapiens (Human).